Here is a 251-residue protein sequence, read N- to C-terminus: Triosephosphate isomerase (251 aa).

A substrate-binding site is contributed by 9 to 11 (NWK). Residue His-95 is the Electrophile of the active site. Glu-167 (proton acceptor) is an active-site residue. Residues Gly-173, Ser-212, and 233 to 234 (GG) contribute to the substrate site.

The protein belongs to the triosephosphate isomerase family. Homodimer.

Its subcellular location is the cytoplasm. It carries out the reaction D-glyceraldehyde 3-phosphate = dihydroxyacetone phosphate. Its pathway is carbohydrate biosynthesis; gluconeogenesis. It participates in carbohydrate degradation; glycolysis; D-glyceraldehyde 3-phosphate from glycerone phosphate: step 1/1. In terms of biological role, involved in the gluconeogenesis. Catalyzes stereospecifically the conversion of dihydroxyacetone phosphate (DHAP) to D-glyceraldehyde-3-phosphate (G3P). The chain is Triosephosphate isomerase from Vibrio sp. (strain ANT-300).